A 138-amino-acid polypeptide reads, in one-letter code: Large ribosomal subunit protein uL16c (138 aa).

Belongs to the universal ribosomal protein uL16 family. As to quaternary structure, part of the 50S ribosomal subunit.

It localises to the plastid. The protein resides in the chloroplast. This chain is Large ribosomal subunit protein uL16c, found in Phaeodactylum tricornutum (strain CCAP 1055/1).